Consider the following 166-residue polypeptide: Large ribosomal subunit protein uL10 (166 aa).

The protein belongs to the universal ribosomal protein uL10 family. In terms of assembly, part of the ribosomal stalk of the 50S ribosomal subunit. The N-terminus interacts with L11 and the large rRNA to form the base of the stalk. The C-terminus forms an elongated spine to which L12 dimers bind in a sequential fashion forming a multimeric L10(L12)X complex.

In terms of biological role, forms part of the ribosomal stalk, playing a central role in the interaction of the ribosome with GTP-bound translation factors. The sequence is that of Large ribosomal subunit protein uL10 from Streptococcus uberis (strain ATCC BAA-854 / 0140J).